The chain runs to 268 residues: Lectin ESA-2 (268 aa).

4 tandem repeats follow at residues 1 to 67 (GRYT…RRGE), 68 to 135 (SNVY…QSGG), 136 to 202 (DTYN…LSGA), and 203 to 268 (NNYS…VATS). Positions 1-268 (GRYTVQNQWG…PIGFKGVATS (268 aa)) are 4 X approximate tandem repeats.

Monomer.

Functionally, lectin specific for high mannose N-glycans, recognizes the branched moiety of these glycans. Does not recognize other types of N-glycans or monosaccharides. Agglutinates trypsin-treated sheep and rabbit erythrocytes and untreated sheep erythrocytes. Has mitogenic activity on mouse lymphocytes. Does not require metal ions for activity. This is Lectin ESA-2 from Eucheuma serra (Marine red alga).